We begin with the raw amino-acid sequence, 619 residues long: Dihydroxy-acid dehydratase 1 (619 aa).

Residue aspartate 81 participates in Mg(2+) binding. Residue cysteine 122 participates in [2Fe-2S] cluster binding. Mg(2+) contacts are provided by aspartate 123 and lysine 124. Lysine 124 bears the N6-carboxylysine mark. Cysteine 198 serves as a coordination point for [2Fe-2S] cluster. Residue glutamate 494 coordinates Mg(2+). The active-site Proton acceptor is serine 520.

This sequence belongs to the IlvD/Edd family. In terms of assembly, homodimer. [2Fe-2S] cluster is required as a cofactor. Requires Mg(2+) as cofactor.

The catalysed reaction is (2R)-2,3-dihydroxy-3-methylbutanoate = 3-methyl-2-oxobutanoate + H2O. It catalyses the reaction (2R,3R)-2,3-dihydroxy-3-methylpentanoate = (S)-3-methyl-2-oxopentanoate + H2O. Its pathway is amino-acid biosynthesis; L-isoleucine biosynthesis; L-isoleucine from 2-oxobutanoate: step 3/4. The protein operates within amino-acid biosynthesis; L-valine biosynthesis; L-valine from pyruvate: step 3/4. Functionally, functions in the biosynthesis of branched-chain amino acids. Catalyzes the dehydration of (2R,3R)-2,3-dihydroxy-3-methylpentanoate (2,3-dihydroxy-3-methylvalerate) into 2-oxo-3-methylpentanoate (2-oxo-3-methylvalerate) and of (2R)-2,3-dihydroxy-3-methylbutanoate (2,3-dihydroxyisovalerate) into 2-oxo-3-methylbutanoate (2-oxoisovalerate), the penultimate precursor to L-isoleucine and L-valine, respectively. The chain is Dihydroxy-acid dehydratase 1 from Bordetella pertussis (strain Tohama I / ATCC BAA-589 / NCTC 13251).